Reading from the N-terminus, the 1103-residue chain is Retinal guanylyl cyclase 1 (1103 aa).

The N-terminal stretch at 1–51 (MTACARRAGGLPDPGLCGPAWWAPSLPRLPRALPRLPLLLLLLLLQPPALS) is a signal peptide. The Extracellular portion of the chain corresponds to 52–462 (AVFTVGVLGP…PNNICGGGLE (411 aa)). A glycan (N-linked (GlcNAc...) asparagine) is linked at N297. Residues 463-487 (PGLVFLGFLLVVGMGLAGAFLAHYV) form a helical membrane-spanning segment. Residues 488–1103 (RHRLLHMQMV…LEKARPGQFS (616 aa)) are Cytoplasmic-facing. In terms of domain architecture, Protein kinase spans 525 to 808 (QGSRSSLGAR…DHTFDLFKNI (284 aa)). In terms of domain architecture, Guanylate cyclase spans 880–1010 (TLYFSDIVGF…DTVNTASRME (131 aa)). The segment at 1065 to 1103 (PIPKPPDLQPGSSNHGISLQEIPPERRRKLEKARPGQFS) is disordered.

This sequence belongs to the adenylyl cyclase class-4/guanylyl cyclase family. In terms of assembly, homodimer; requires homodimerization for guanylyl cyclase activity. Interacts with RD3; promotes the exit of GUCY2D from the endoplasmic reticulum and its trafficking to the photoreceptor outer segments. Interaction with RD3 negatively regulates guanylate cyclase activity. Retina.

It is found in the photoreceptor outer segment membrane. It localises to the endoplasmic reticulum membrane. It carries out the reaction GTP = 3',5'-cyclic GMP + diphosphate. Activated by GUCA1A when free calcium ions concentration is low, and inhibited by GUCA1A when free calcium ions concentration is high. Negatively regulated by RD3; inhibits the basal and GUCA1A-stimulated guanylate cyclase activity. In terms of biological role, catalyzes the synthesis of cyclic GMP (cGMP) in rods and cones of photoreceptors. Plays an essential role in phototransduction, by mediating cGMP replenishment. May also participate in the trafficking of membrane-asociated proteins to the photoreceptor outer segment membrane. This chain is Retinal guanylyl cyclase 1 (GUCY2D), found in Homo sapiens (Human).